The primary structure comprises 429 residues: Transcriptional adapter 3 (429 aa).

Residues 41–70 (IEELDTLQLELETLLSSASRRLRALEEQRQ) adopt a coiled-coil conformation. 3 disordered regions span residues 86-132 (KLEK…TKVQ), 208-257 (EERR…PFGP), and 274-308 (PMED…HTRS). Basic and acidic residues-rich tracts occupy residues 208–221 (EERR…DKKK) and 230–249 (LDAK…HEPP). Residues 364 to 404 (LLKLAREEMRKQELRQRVRVADNEVMEAFRRIMAARQKKRT) are a coiled coil.

The protein belongs to the NGG1 family.

The protein localises to the nucleus. Functionally, functions as a component of the PCAF complex. The PCAF complex is capable of efficiently acetylating histones in a nucleosomal context. This chain is Transcriptional adapter 3 (tada3), found in Danio rerio (Zebrafish).